Reading from the N-terminus, the 130-residue chain is Small ribosomal subunit protein uS8 (130 aa).

The protein belongs to the universal ribosomal protein uS8 family. Part of the 30S ribosomal subunit.

In terms of biological role, one of the primary rRNA binding proteins, it binds directly to 16S rRNA central domain where it helps coordinate assembly of the platform of the 30S subunit. The protein is Small ribosomal subunit protein uS8 of Methanosarcina barkeri (strain Fusaro / DSM 804).